A 367-amino-acid chain; its full sequence is Aspartate-semialdehyde dehydrogenase (367 aa).

NADP(+) contacts are provided by residues 10 to 13, 37 to 38, and Gln73; these read RGMV and TS. Arg102 contributes to the phosphate binding site. Cys135 serves as the catalytic Acyl-thioester intermediate. Cys135 is subject to S-cysteinyl cysteine; in inhibited form. Gln162 provides a ligand contact to substrate. Residues 165 to 169, Arg173, and Pro193 contribute to the NADP(+) site; that span reads SGGGA. Glu241 lines the substrate pocket. Lys244 contacts phosphate. Arg267 is a substrate binding site. His274 (proton acceptor) is an active-site residue. Gln350 lines the NADP(+) pocket.

The protein belongs to the aspartate-semialdehyde dehydrogenase family. Homodimer.

It carries out the reaction L-aspartate 4-semialdehyde + phosphate + NADP(+) = 4-phospho-L-aspartate + NADPH + H(+). Its pathway is amino-acid biosynthesis; L-lysine biosynthesis via DAP pathway; (S)-tetrahydrodipicolinate from L-aspartate: step 2/4. It participates in amino-acid biosynthesis; L-methionine biosynthesis via de novo pathway; L-homoserine from L-aspartate: step 2/3. It functions in the pathway amino-acid biosynthesis; L-threonine biosynthesis; L-threonine from L-aspartate: step 2/5. Is inhibited by L- and D-cystine, and by other cystine derivatives, via the formation of a covalently bound cysteine at the active site Cys-135. Catalyzes the NADPH-dependent formation of L-aspartate-semialdehyde (L-ASA) by the reductive dephosphorylation of L-aspartyl-4-phosphate. The sequence is that of Aspartate-semialdehyde dehydrogenase from Escherichia coli (strain K12).